Reading from the N-terminus, the 450-residue chain is Tubulin alpha-3E chain (450 aa).

Positions 1 to 4 match the MREC motif motif; the sequence is MREC. Glutamine 11 contributes to the GTP binding site. An N6-acetyllysine modification is found at lysine 40. GTP-binding residues include glutamate 71, serine 140, glycine 144, threonine 145, threonine 179, asparagine 206, and asparagine 228. Position 71 (glutamate 71) interacts with Mg(2+). Glutamate 254 is a catalytic residue. Residue tyrosine 282 is modified to 3'-nitrotyrosine. At serine 439 the chain carries Phosphoserine. Tyrosine 450 bears the 3'-nitrotyrosine mark.

It belongs to the tubulin family. As to quaternary structure, dimer of alpha and beta chains. A typical microtubule is a hollow water-filled tube with an outer diameter of 25 nm and an inner diameter of 15 nM. Alpha-beta heterodimers associate head-to-tail to form protofilaments running lengthwise along the microtubule wall with the beta-tubulin subunit facing the microtubule plus end conferring a structural polarity. Microtubules usually have 13 protofilaments but different protofilament numbers can be found in some organisms and specialized cells. The cofactor is Mg(2+). Post-translationally, some glutamate residues at the C-terminus are polyglutamylated, resulting in polyglutamate chains on the gamma-carboxyl group. Polyglutamylation plays a key role in microtubule severing by spastin (SPAST). SPAST preferentially recognizes and acts on microtubules decorated with short polyglutamate tails: severing activity by SPAST increases as the number of glutamates per tubulin rises from one to eight, but decreases beyond this glutamylation threshold. Glutamylation is also involved in cilia motility. Some glutamate residues at the C-terminus are monoglycylated but not polyglycylated due to the absence of functional TTLL10 in human. Monoglycylation is mainly limited to tubulin incorporated into cilia and flagella axonemes, which is required for their stability and maintenance. Flagella glycylation controls sperm motility. Both polyglutamylation and monoglycylation can coexist on the same protein on adjacent residues, and lowering glycylation levels increases polyglutamylation, and reciprocally. In terms of processing, acetylation of alpha chains at Lys-40 is located inside the microtubule lumen. This modification has been correlated with increased microtubule stability, intracellular transport and ciliary assembly. Post-translationally, methylation of alpha chains at Lys-40 is found in mitotic microtubules and is required for normal mitosis and cytokinesis contributing to genomic stability. Nitration of Tyr-450 is irreversible and interferes with normal dynein intracellular distribution. In terms of processing, undergoes a tyrosination/detyrosination cycle, the cyclic removal and re-addition of a C-terminal tyrosine residue by the enzymes tubulin tyrosine carboxypeptidase (MATCAP1/KIAA0895L, VASH1 or VASH2) and tubulin tyrosine ligase (TTL), respectively. Post-translationally, tyrosination promotes microtubule interaction with CAP-Gly domain-containing proteins such as CLIP1, CLIP2 and DCTN1. Tyrosination regulates the initiation of dynein-dynactin motility via interaction with DCTN1, which brings the dynein-dynactin complex into contact with microtubules. In neurons, tyrosinated tubulins mediate the initiation of retrograde vesicle transport. Detyrosination is involved in metaphase plate congression by guiding chromosomes during mitosis: detyrosination promotes interaction with CENPE, promoting pole-proximal transport of chromosomes toward the equator. Detyrosination increases microtubules-dependent mechanotransduction in dystrophic cardiac and skeletal muscle. In cardiomyocytes, detyrosinated microtubules are required to resist to contractile compression during contraction: detyrosination promotes association with desmin (DES) at force-generating sarcomeres, leading to buckled microtubules and mechanical resistance to contraction.

It localises to the cytoplasm. The protein resides in the cytoskeleton. The enzyme catalyses GTP + H2O = GDP + phosphate + H(+). Functionally, tubulin is the major constituent of microtubules, a cylinder consisting of laterally associated linear protofilaments composed of alpha- and beta-tubulin heterodimers. Microtubules grow by the addition of GTP-tubulin dimers to the microtubule end, where a stabilizing cap forms. Below the cap, tubulin dimers are in GDP-bound state, owing to GTPase activity of alpha-tubulin. This is Tubulin alpha-3E chain (TUBA3E) from Homo sapiens (Human).